Consider the following 364-residue polypeptide: Aminomethyltransferase (364 aa).

The protein belongs to the GcvT family. As to quaternary structure, the glycine cleavage system is composed of four proteins: P, T, L and H.

The catalysed reaction is N(6)-[(R)-S(8)-aminomethyldihydrolipoyl]-L-lysyl-[protein] + (6S)-5,6,7,8-tetrahydrofolate = N(6)-[(R)-dihydrolipoyl]-L-lysyl-[protein] + (6R)-5,10-methylene-5,6,7,8-tetrahydrofolate + NH4(+). Functionally, the glycine cleavage system catalyzes the degradation of glycine. The polypeptide is Aminomethyltransferase (Salmonella enteritidis PT4 (strain P125109)).